The chain runs to 310 residues: Serine/threonine-protein kinase pim-2 (310 aa).

In terms of domain architecture, Protein kinase spans 30-290; sequence YTMGNLLGSG…LEQILQHPWM (261 aa). Residues 36–44 and Lys-59 each bind ATP; that span reads LGSGGFGSV. Catalysis depends on Asp-167, which acts as the Proton acceptor.

The protein belongs to the protein kinase superfamily. CAMK Ser/Thr protein kinase family. PIM subfamily. In terms of processing, autophosphorylated.

It carries out the reaction L-seryl-[protein] + ATP = O-phospho-L-seryl-[protein] + ADP + H(+). The enzyme catalyses L-threonyl-[protein] + ATP = O-phospho-L-threonyl-[protein] + ADP + H(+). Functionally, proto-oncogene with serine/threonine kinase activity involved in cell survival and cell proliferation. The chain is Serine/threonine-protein kinase pim-2 (pim2) from Danio rerio (Zebrafish).